The sequence spans 907 residues: Nuclear receptor coactivator 7 (907 aa).

Residues 1–12 (METKEEKKERRQ) show a composition bias toward basic and acidic residues. Residues 1 to 29 (METKEEKKERRQGYFARLKKKRQAKQNTE) are a coiled coil. Disordered regions lie at residues 1–51 (METK…DDES), 63–83 (DNCKFAGEKETVPEKEKRKKK), and 99–121 (YSTDDNQNKTNEKKEKKMVSQKP). The span at 25-41 (KQNTETVSANSPGSPVS) shows a compositional bias: polar residues. Composition is skewed to basic and acidic residues over residues 68-78 (AGEKETVPEKE) and 99-116 (YSTDDNQNKTNEKKEKKM). A LysM domain is found at 125–168 (IEYTAGNQDTINSIALKFNITPNKLVELNKLFTHTIVPGQILFV). Disordered regions lie at residues 335 to 373 (LSKEKRQQNGDSPNVPGAKQINPSDKEKSADFEVLQSSE) and 401 to 443 (DPHV…MDRG). Basic and acidic residues predominate over residues 401–422 (DPHVKEPSEEKNVSDIRTKEDS). One can recognise a TLDc domain in the interval 746–907 (ALLENMHIEQ…IQDVEVWTFE (162 aa)).

Belongs to the OXR1 family.

It localises to the nucleus. In terms of biological role, enhances the transcriptional activities of several nuclear receptors. The polypeptide is Nuclear receptor coactivator 7 (NCOA7) (Gallus gallus (Chicken)).